The sequence spans 275 residues: Seminase (275 aa).

Positions 1 to 19 (MKRLLFLFLLAGILINNHA) are cleaved as a signal peptide. Residue Asn23 is glycosylated (N-linked (GlcNAc...) asparagine). Positions 44–268 (VIGGRVTTNA…VKPFIVKGIK (225 aa)) constitute a Peptidase S1 domain. Cysteines 70 and 86 form a disulfide. Residues His85 and Asp131 each act as charge relay system in the active site. Disulfide bonds link Cys194–Cys210 and Cys220–Cys244. Ser224 serves as the catalytic Charge relay system.

It belongs to the peptidase S1 family. Post-translationally, undergoes cleavage in the male during mating with a cleaved product detected in the ejaculatory duct and/or bulb of males by 8-10 minutes after the start of mating. Further cleavage occurs in the mated female. In terms of tissue distribution, produced in the male accessory glands and secreted into seminal fluid.

The protein localises to the secreted. In terms of biological role, seminal fluid protease which is required for cleavage and probably also activation of the metalloprotease Semp1. Also required for a number of female post-mating responses independent of Semp1 including egg laying and sperm usage. The protein is Seminase of Drosophila melanogaster (Fruit fly).